An 891-amino-acid polypeptide reads, in one-letter code: Protein translocase subunit SecA (891 aa).

ATP is bound by residues Gln83, 101 to 105, and Asp489; that span reads GEGKT.

It belongs to the SecA family.

It is found in the plastid. Its subcellular location is the chloroplast stroma. It localises to the chloroplast thylakoid membrane. The enzyme catalyses ATP + H2O + cellular proteinSide 1 = ADP + phosphate + cellular proteinSide 2.. Has a central role in coupling the hydrolysis of ATP to the transfer of proteins across the thylakoid membrane. In Diacronema lutheri (Unicellular marine alga), this protein is Protein translocase subunit SecA.